A 451-amino-acid polypeptide reads, in one-letter code: UDP-glycosyltransferase 76C4 (451 aa).

UDP-alpha-D-glucose contacts are provided by residues serine 273, 332-334 (APQ), 349-357 (HNGWNSTVE), and 371-374 (RWDQ).

The protein belongs to the UDP-glycosyltransferase family.

The sequence is that of UDP-glycosyltransferase 76C4 (UGT76C4) from Arabidopsis thaliana (Mouse-ear cress).